The sequence spans 105 residues: Large ribosomal subunit protein uL23 (105 aa).

Belongs to the universal ribosomal protein uL23 family. Part of the 50S ribosomal subunit. Contacts protein L29, and trigger factor when it is bound to the ribosome.

In terms of biological role, one of the early assembly proteins it binds 23S rRNA. One of the proteins that surrounds the polypeptide exit tunnel on the outside of the ribosome. Forms the main docking site for trigger factor binding to the ribosome. The sequence is that of Large ribosomal subunit protein uL23 from Ureaplasma parvum serovar 3 (strain ATCC 27815 / 27 / NCTC 11736).